Consider the following 637-residue polypeptide: tRNA uridine 5-carboxymethylaminomethyl modification enzyme MnmG (637 aa).

FAD-binding positions include 15-20, isoleucine 127, and serine 182; that span reads GAGHAG. Residue 276–290 participates in NAD(+) binding; the sequence is GPRYCPSIEDKIVRF. Glutamine 373 is an FAD binding site.

Belongs to the MnmG family. In terms of assembly, homodimer. Heterotetramer of two MnmE and two MnmG subunits. It depends on FAD as a cofactor.

It localises to the cytoplasm. Functionally, NAD-binding protein involved in the addition of a carboxymethylaminomethyl (cmnm) group at the wobble position (U34) of certain tRNAs, forming tRNA-cmnm(5)s(2)U34. The polypeptide is tRNA uridine 5-carboxymethylaminomethyl modification enzyme MnmG (Streptococcus pneumoniae (strain ATCC BAA-255 / R6)).